Here is a 663-residue protein sequence, read N- to C-terminus: Glucans biosynthesis glucosyltransferase H (663 aa).

A run of 6 helical transmembrane segments spans residues 64 to 86 (WMLGLMTIAMGVAGWKASFDTIA), 101 to 123 (LAPLFLALSLWFCTALIGFVVLM), 413 to 435 (LVIGVLSYALSPLWFFCLSAGLI), 470 to 492 (AWAMIITFVLLFGPKILGAILVL), 558 to 580 (EAWAAMGWISLSGLILAASFWFT), and 584 to 606 (LTATAPILAGLVLAVPLTMLGAH).

The protein belongs to the glycosyltransferase 2 family. OpgH subfamily.

The protein resides in the cell inner membrane. It participates in glycan metabolism; osmoregulated periplasmic glucan (OPG) biosynthesis. Involved in the biosynthesis of osmoregulated periplasmic glucans (OPGs). The chain is Glucans biosynthesis glucosyltransferase H from Caulobacter vibrioides (strain ATCC 19089 / CIP 103742 / CB 15) (Caulobacter crescentus).